Here is a 100-residue protein sequence, read N- to C-terminus: MIGLNHYLIVSGLLFCIGLAGMLKRKNILLLFFSTEIMLNAINIGFVAISRYTHNLDGQMFALFIIAIAASEVAIGLGLVILWFKKYKSLDIDSLNAMKG.

The next 3 membrane-spanning stretches (helical) occupy residues 1 to 21, 28 to 48, and 64 to 84; these read MIGLNHYLIVSGLLFCIGLAG, ILLLFFSTEIMLNAINIGFVA, and FIIAIAASEVAIGLGLVILWF.

The protein belongs to the complex I subunit 4L family. In terms of assembly, NDH-1 is composed of 14 different subunits. Subunits NuoA, H, J, K, L, M, N constitute the membrane sector of the complex.

The protein localises to the cell inner membrane. It catalyses the reaction a quinone + NADH + 5 H(+)(in) = a quinol + NAD(+) + 4 H(+)(out). Functionally, NDH-1 shuttles electrons from NADH, via FMN and iron-sulfur (Fe-S) centers, to quinones in the respiratory chain. The immediate electron acceptor for the enzyme in this species is believed to be ubiquinone. Couples the redox reaction to proton translocation (for every two electrons transferred, four hydrogen ions are translocated across the cytoplasmic membrane), and thus conserves the redox energy in a proton gradient. The protein is NADH-quinone oxidoreductase subunit K of Helicobacter pylori (strain B38).